We begin with the raw amino-acid sequence, 400 residues long: Elongation factor Tu (400 aa).

Residues 10–209 (KPHVNVGTIG…AVDSYIPTPE (200 aa)) enclose the tr-type G domain. The tract at residues 19-26 (GHVDHGKT) is G1. Residue 19–26 (GHVDHGKT) coordinates GTP. Thr-26 contacts Mg(2+). Residues 60 to 64 (GITIA) form a G2 region. The interval 81–84 (DCPG) is G3. GTP is bound by residues 81–85 (DCPGH) and 136–139 (NKVD). Residues 136 to 139 (NKVD) are G4. The tract at residues 174-176 (SAL) is G5.

This sequence belongs to the TRAFAC class translation factor GTPase superfamily. Classic translation factor GTPase family. EF-Tu/EF-1A subfamily. As to quaternary structure, monomer.

The protein resides in the cytoplasm. It carries out the reaction GTP + H2O = GDP + phosphate + H(+). Functionally, GTP hydrolase that promotes the GTP-dependent binding of aminoacyl-tRNA to the A-site of ribosomes during protein biosynthesis. The polypeptide is Elongation factor Tu (Moorella thermoacetica (strain ATCC 39073 / JCM 9320)).